The primary structure comprises 1044 residues: GRB10-interacting GYF protein 1 (1044 aa).

Ser-24, Ser-28, Ser-137, and Ser-157 each carry phosphoserine. Disordered stretches follow at residues 104–290 (GKGA…DGLP) and 306–424 (ASGA…LEDE). Basic and acidic residues-rich tracts occupy residues 148-179 (NPRE…RSGF) and 186-203 (PRKE…SLRE). Ser-228 carries the post-translational modification Phosphoserine. Composition is skewed to basic and acidic residues over residues 237 to 265 (GWRE…EDGR) and 316 to 332 (GPKE…FRGL). Over residues 333-350 (EEEEEEEEEPSEGVDEER) the composition is skewed to acidic residues. Residue Ser-343 is modified to Phosphoserine. Over residues 366 to 379 (NSSSPSSLPALGPL) the composition is skewed to low complexity. The segment covering 389–403 (AVEKELPPAEGDELR) has biased composition (basic and acidic residues). Residue Ser-408 is modified to Phosphoserine. Residues 476-524 (ARKWFYKDPQGEIQGPFTTQEMAEWFQAGYFSMSLLVKRGCDEGFQPLG) enclose the GYF domain. A phosphoserine mark is found at Ser-540 and Ser-634. A compositionally biased stretch (basic and acidic residues) spans 692–706 (KREEEERKRREEKRR). 6 disordered regions span residues 692 to 721 (KREE…RQEE), 820 to 842 (EAGP…LGLW), 855 to 883 (SLGL…RKKT), 966 to 987 (QKAS…QEAW), 1000 to 1019 (NHST…RALM), and 1024 to 1044 (PSIL…VDDY). Over residues 829 to 839 (DKSGGSSGGNL) the composition is skewed to gly residues. 2 stretches are compositionally biased toward low complexity: residues 855–877 (SLGL…LSGR) and 970–984 (QQRQ…QQQQ). Ser-863 carries the phosphoserine modification.

It belongs to the GIGYF family. As to quaternary structure, interacts with GRB10. This transient binding is increased under IGF1 stimulation and leads to recruitment of GIGYF1/GRB10 complex to IGF1 receptor. Interacts with DDX6. In terms of tissue distribution, ubiquitous. Lower expression in skeletal muscle, liver and testis.

Functionally, may act cooperatively with GRB10 to regulate tyrosine kinase receptor signaling. May increase IGF1 receptor phosphorylation under IGF1 stimulation as well as phosphorylation of IRS1 and SHC1. This Mus musculus (Mouse) protein is GRB10-interacting GYF protein 1 (Gigyf1).